Here is a 421-residue protein sequence, read N- to C-terminus: Lipid II:glycine glycyltransferase (421 aa).

This sequence belongs to the FemABX family. As to quaternary structure, monomer.

It localises to the cytoplasm. The enzyme catalyses beta-D-GlcNAc-(1-&gt;4)-Mur2Ac(oyl-L-Ala-D-isoglutaminyl-L-Lys-D-Ala-D-Ala)-di-trans,octa-cis-undecaprenyl diphosphate + glycyl-tRNA(Gly) = beta-D-GlcNAc-(1-&gt;4)-Mur2Ac(oyl-L-Ala-D-isoglutaminyl-L-Lys-(N(6)-Gly)-D-Ala-D-Ala)-di-trans,octa-cis-undecaprenyl diphosphate + tRNA(Gly) + H(+). Catalyzes the incorporation of the first glycine of the pentaglycine interpeptide bridge, which is characteristic of the S.aureus peptidoglycan. This glycine is added to the epsilon-amino group of the L-lysine of the membrane-bound lipid II intermediate (GlcNAc-(beta-1,4)-N-acetylmuramic acid(-L-Ala-D-iGln-L-Lys-D-Ala-D-Ala)-pyrophosphoryl-undecaprenol), using glycyl-tRNA(Gly) as donor, in a ribosome-independent mechanism. In Staphylococcus aureus (strain bovine RF122 / ET3-1), this protein is Lipid II:glycine glycyltransferase (femX).